The following is a 419-amino-acid chain: Probable glycosidase C21B10.07 (419 aa).

Disordered regions lie at residues 1–20 (MGIP…AALS) and 29–67 (DPAR…NNEN). Over residues 30–59 (PARKNESTNDVIDNHTDTEIDDHDNDHENL) the composition is skewed to basic and acidic residues. A helical transmembrane segment spans residues 88–108 (FIWILIFIVALICSVLIGVLG). Residues 122 to 387 (PSYKAKTYSL…WAGSSVYSSA (266 aa)) form the GH16 domain. The Nucleophile role is filled by glutamate 237. Residue glutamate 242 is the Proton donor of the active site.

It belongs to the glycosyl hydrolase 16 family.

Its subcellular location is the membrane. The sequence is that of Probable glycosidase C21B10.07 from Schizosaccharomyces pombe (strain 972 / ATCC 24843) (Fission yeast).